The following is a 486-amino-acid chain: Sensor protein PhoQ (486 aa).

The Cytoplasmic segment spans residues 1–16 (MKKLLHLFFPLSLRVR). Residues 17 to 37 (FLLATAAVVLVLSLAYGMVAL) form a helical membrane-spanning segment. At 38–194 (IGYSVSFDKT…LKSSYMVWSW (157 aa)) the chain is on the periplasmic side. Residues aspartate 151 and aspartate 152 each coordinate a divalent metal cation. The helical transmembrane segment at 195 to 215 (FIYVLSANLLLVIPLLWVAAW) threads the bilayer. Residues 215 to 266 (WWSLRPIEALAKEVRELEEHNRELLNPATTRELTSLVRNLNRLLKSERERYD) enclose the HAMP domain. At 216–486 (WSLRPIEALA…GRQHSTPKDE (271 aa)) the chain is on the cytoplasmic side. The 207-residue stretch at 274-480 (DLTHSLKTPL…RMEVIFGRQH (207 aa)) folds into the Histidine kinase domain. Histidine 277 is modified (phosphohistidine; by autocatalysis). Asparagine 385 serves as a coordination point for Mg(2+). Residues 385–393 (NVLDNACKY), 415–420 (DDGPGI), and 434–446 (RVDT…GVGL) contribute to the ATP site. Glutamine 442 lines the Mg(2+) pocket.

In terms of assembly, homodimer.

Its subcellular location is the cell inner membrane. It carries out the reaction ATP + protein L-histidine = ADP + protein N-phospho-L-histidine.. In terms of biological role, member of the two-component regulatory system PhoP/PhoQ involved in virulence, adaptation to low Mg(2+) environments and the control of acid resistance genes. In low periplasmic Mg(2+), PhoQ functions as a membrane-associated protein kinase that undergoes autophosphorylation and subsequently transfers the phosphate to PhoP, resulting in the expression of PhoP-activated genes (PAG) and repression of PhoP-repressed genes (PRG). In high periplasmic Mg(2+), acts as a protein phosphatase that dephosphorylates phospho-PhoP, which results in the repression of PG and may lead to expression of some PRG. In Escherichia coli O157:H7, this protein is Sensor protein PhoQ (phoQ).